A 177-amino-acid polypeptide reads, in one-letter code: Inorganic pyrophosphatase (177 aa).

Positions 31, 45, and 57 each coordinate substrate. Asp-67, Asp-72, and Asp-104 together coordinate Mg(2+). Residue Tyr-141 coordinates substrate.

Belongs to the PPase family. As to quaternary structure, homohexamer. Also forms homotrimers, but the trimeric form is 23% less active than the hexamer. In fact, likely forms a dimer of trimers. It depends on Mg(2+) as a cofactor.

The protein localises to the cytoplasm. The enzyme catalyses diphosphate + H2O = 2 phosphate + H(+). With respect to regulation, inhibited by sodium fluoride (NaF) in vitro, similarly to other class A type inorganic pyrophosphatases. Its function is as follows. Catalyzes the hydrolysis of inorganic pyrophosphate (PPi) forming two phosphate ions. The hydrolysis of PPi by inorganic pyrophosphatase releases a considerable amount of energy that can drive unfavorable biochemical transformations to completion. Is not active on nucleoside triphosphates (ATP, TTP, GTP, or CTP) or nucleoside diphosphate (ADP). This is Inorganic pyrophosphatase from Haloferax volcanii (strain ATCC 29605 / DSM 3757 / JCM 8879 / NBRC 14742 / NCIMB 2012 / VKM B-1768 / DS2) (Halobacterium volcanii).